The sequence spans 354 residues: Fructose-bisphosphate aldolase (354 aa).

S50 is a binding site for D-glyceraldehyde 3-phosphate. The active-site Proton donor is D83. The Zn(2+) site is built by H84, D105, E142, and H198. G199 lines the dihydroxyacetone phosphate pocket. H232 contributes to the Zn(2+) binding site. Residues 233–235 and 275–278 each bind dihydroxyacetone phosphate; these read GSS and NIDT.

Belongs to the class II fructose-bisphosphate aldolase family. Homodimer. Zn(2+) serves as cofactor.

The enzyme catalyses beta-D-fructose 1,6-bisphosphate = D-glyceraldehyde 3-phosphate + dihydroxyacetone phosphate. Its pathway is carbohydrate biosynthesis; Calvin cycle. It functions in the pathway carbohydrate degradation; glycolysis; D-glyceraldehyde 3-phosphate and glycerone phosphate from D-glucose: step 4/4. Its activity is regulated as follows. Activity is stimulated by Fe(2+) in autotrophically grown cells. In terms of biological role, catalyzes the aldol condensation of dihydroxyacetone phosphate (DHAP or glycerone-phosphate) with glyceraldehyde 3-phosphate (G3P) to form fructose 1,6-bisphosphate (FBP) in gluconeogenesis and the reverse reaction in glycolysis. This chain is Fructose-bisphosphate aldolase, found in Xanthobacter flavus.